The primary structure comprises 334 residues: DNA-directed RNA polymerase subunit alpha (334 aa).

The alpha N-terminal domain (alpha-NTD) stretch occupies residues 1–234; the sequence is MQTKVNELLK…SQLAAFVELQ (234 aa). The segment at 248–334 is alpha C-terminal domain (alpha-CTD); sequence IDPILLRPVD…LKDQDKKASG (87 aa).

This sequence belongs to the RNA polymerase alpha chain family. Homodimer. The RNAP catalytic core consists of 2 alpha, 1 beta, 1 beta' and 1 omega subunit. When a sigma factor is associated with the core the holoenzyme is formed, which can initiate transcription.

The catalysed reaction is RNA(n) + a ribonucleoside 5'-triphosphate = RNA(n+1) + diphosphate. Its function is as follows. DNA-dependent RNA polymerase catalyzes the transcription of DNA into RNA using the four ribonucleoside triphosphates as substrates. This is DNA-directed RNA polymerase subunit alpha from Thioalkalivibrio sulfidiphilus (strain HL-EbGR7).